Reading from the N-terminus, the 310-residue chain is Thioredoxin reductase (310 aa).

34–41 is an FAD binding site; sequence NGMQPGGQ. Cys-135 and Cys-138 are disulfide-bonded. Position 281-290 (281-290) interacts with FAD; the sequence is DVQDKIYRQA.

It belongs to the class-II pyridine nucleotide-disulfide oxidoreductase family. In terms of assembly, homodimer. FAD serves as cofactor.

It localises to the cytoplasm. The catalysed reaction is [thioredoxin]-dithiol + NADP(+) = [thioredoxin]-disulfide + NADPH + H(+). The chain is Thioredoxin reductase (trxB) from Rickettsia typhi (strain ATCC VR-144 / Wilmington).